The sequence spans 127 residues: Large ribosomal subunit protein bL12 (127 aa).

It belongs to the bacterial ribosomal protein bL12 family. In terms of assembly, homodimer. Part of the ribosomal stalk of the 50S ribosomal subunit. Forms a multimeric L10(L12)X complex, where L10 forms an elongated spine to which 2 to 4 L12 dimers bind in a sequential fashion. Binds GTP-bound translation factors.

Forms part of the ribosomal stalk which helps the ribosome interact with GTP-bound translation factors. Is thus essential for accurate translation. The polypeptide is Large ribosomal subunit protein bL12 (Phytoplasma mali (strain AT)).